The chain runs to 301 residues: MSHTAEIPLVPGSESPLELKPLKAADPQAVYHRRAHRLLSLAKDSPLADYFELCRRLVSIQAKLAEEADFGQLLAWGKDEATPLSLLGSEADSYWQGLLQQLLSDLLPQVDESIARVMRLLMQQSPEQLSSWGRSLRQGHVSEVPAHFSLFIWAAMGVYWSHWAPMVIKRMDQRKVAQQSMCPVCGCHPVASVIVDQPRAGLRYLHCSLCESEWHYIRAHCTSCGQDKEMTIWSLDDAQAQVRIESCDECHGYTKMMFVENSPSMDVAADDLATLMLDSELNAKGFGATTLNPLLMAHETT.

Belongs to the FdhE family.

It is found in the cytoplasm. Its function is as follows. Necessary for formate dehydrogenase activity. This Shewanella baltica (strain OS185) protein is Protein FdhE homolog.